The chain runs to 424 residues: Poly-cysteine and histidine-tailed protein (424 aa).

An N-terminal signal peptide occupies residues 1–17 (MAFSTIVVLFVAAVGFG). N-linked (GlcNAc...) asparagine glycosylation is present at Asn291. The segment covering 372–390 (VGGKKQQKDQPESEKKAEN) has biased composition (basic and acidic residues). The disordered stretch occupies residues 372–424 (VGGKKQQKDQPESEKKAENMPETTGNASHHQHRHHHGDSSSESHEQHHHHHHH). Asn397 is a glycosylation site (N-linked (GlcNAc...) asparagine).

In terms of processing, glycosylated. As to expression, expressed in larval tissues like cuticle, hypodermis and muscle (at protein level). Note=Not excreted into striated muscle fibers or nurse cell.

Its subcellular location is the secreted. Binds iron and zinc. May bind nickel. This chain is Poly-cysteine and histidine-tailed protein, found in Trichinella spiralis (Trichina worm).